The following is a 348-amino-acid chain: Dihydroorotase (348 aa).

Zn(2+) is bound by residues H13 and H15. Residues 15–17 (HLR) and N41 contribute to the substrate site. K99, H136, and H174 together coordinate Zn(2+). The residue at position 99 (K99) is an N6-carboxylysine. A substrate-binding site is contributed by H136. L219 contacts substrate. D247 serves as a coordination point for Zn(2+). D247 is an active-site residue. Positions 251 and 263 each coordinate substrate.

The protein belongs to the metallo-dependent hydrolases superfamily. DHOase family. Class II DHOase subfamily. In terms of assembly, homodimer. The cofactor is Zn(2+).

It catalyses the reaction (S)-dihydroorotate + H2O = N-carbamoyl-L-aspartate + H(+). Its pathway is pyrimidine metabolism; UMP biosynthesis via de novo pathway; (S)-dihydroorotate from bicarbonate: step 3/3. In terms of biological role, catalyzes the reversible cyclization of carbamoyl aspartate to dihydroorotate. The chain is Dihydroorotase from Coxiella burnetii (strain RSA 331 / Henzerling II).